A 518-amino-acid polypeptide reads, in one-letter code: Two-component response regulator-like PRR1 (518 aa).

The Response regulatory domain maps to Arg-29 to Trp-147. 3 disordered regions span residues Pro-172 to Met-241, Thr-266 to Val-305, and Val-483 to Glu-518. A compositionally biased stretch (polar residues) spans Asn-196–Ser-212. The CCT domain maps to Arg-443–Gln-485.

This sequence belongs to the ARR-like family. As to quaternary structure, interacts with PIL13. Interacts with PIL15.

The protein resides in the nucleus. Controls photoperiodic flowering response. Seems to be one of the component of the circadian clock. Expression of several members of the ARR-like family is controlled by circadian rhythm. The particular coordinated sequential expression of PRR73, PRR37, PRR95, PRR59 and PPR1 result to circadian waves that may be at the basis of the endogenous circadian clock. The sequence is that of Two-component response regulator-like PRR1 (PRR1) from Oryza sativa subsp. japonica (Rice).